A 511-amino-acid polypeptide reads, in one-letter code: 4,4'-diapophytoene desaturase (4,4'-diapolycopene-forming) (511 aa).

This sequence belongs to the carotenoid/retinoid oxidoreductase family.

It catalyses the reaction 15-cis-4,4'-diapophytoene + 4 FAD + 4 H(+) = all-trans-4,4'-diapolycopene + 4 FADH2. It participates in carotenoid biosynthesis. In terms of biological role, involved in the biosynthesis of C30 carotenoids. Catalyzes four successive dehydrogenation reactions that lead to the introduction of four double bonds into 4,4'-diapophytoene (dehydrosqualene) to yield 4,4'-diapolycopene. This is 4,4'-diapophytoene desaturase (4,4'-diapolycopene-forming) from Methylomonas sp.